Reading from the N-terminus, the 321-residue chain is Cytochrome c biogenesis protein CcsA (321 aa).

The next 7 helical transmembrane spans lie at 9–29 (ILTH…LITL), 44–64 (GMIA…VSSG), 68–88 (LSNL…LHTI), 143–163 (MLLS…LLII), 225–245 (VISL…VWAN), 259–273 (TWAF…IYLH), and 288–308 (VASI…LLGI).

The protein belongs to the CcmF/CycK/Ccl1/NrfE/CcsA family. In terms of assembly, may interact with Ccs1.

The protein resides in the plastid. Its subcellular location is the chloroplast thylakoid membrane. Required during biogenesis of c-type cytochromes (cytochrome c6 and cytochrome f) at the step of heme attachment. The sequence is that of Cytochrome c biogenesis protein CcsA from Saccharum hybrid (Sugarcane).